The primary structure comprises 489 residues: Type II restriction enzyme Sau3AI (489 aa).

Requires Mg(2+) as cofactor.

The enzyme catalyses Endonucleolytic cleavage of DNA to give specific double-stranded fragments with terminal 5'-phosphates.. In terms of biological role, an E and P subtype restriction enzyme that recognizes the double-stranded sequence 5'-GATC-3' and cleaves before G-1. In Staphylococcus aureus, this protein is Type II restriction enzyme Sau3AI (sau3AIR).